The sequence spans 154 residues: Small heat shock protein IbpB (154 aa).

Positions 26–137 (GQEPQGFPPY…QPQRIAIGSA (112 aa)) constitute a sHSP domain.

The protein belongs to the small heat shock protein (HSP20) family. In terms of assembly, homodimer. Forms homomultimers of about 100-150 subunits at optimal growth temperatures. Conformation changes to oligomers at high temperatures or high ionic concentrations. The decrease in size of the multimers is accompanied by an increase in chaperone activity.

Its subcellular location is the cytoplasm. Its function is as follows. Associates with aggregated proteins, together with IbpA, to stabilize and protect them from irreversible denaturation and extensive proteolysis during heat shock and oxidative stress. Aggregated proteins bound to the IbpAB complex are more efficiently refolded and reactivated by the ATP-dependent chaperone systems ClpB and DnaK/DnaJ/GrpE. Its activity is ATP-independent. In Yersinia pseudotuberculosis serotype O:1b (strain IP 31758), this protein is Small heat shock protein IbpB.